Reading from the N-terminus, the 72-residue chain is Probable protein transport protein Sec61 subunit gamma (72 aa).

Over 1–40 the chain is Cytoplasmic; the sequence is MSQKLQKPSFLSEYLRSIRLFSKKCVRPSGKELSMSIKRH. The helical transmembrane segment at 41–61 threads the bilayer; sequence AIGIGFLGILGYAIKLIHIPI. The Extracellular portion of the chain corresponds to 62-72; that stretch reads NNIIVSSPGKE.

The protein belongs to the SecE/SEC61-gamma family. In terms of assembly, heterotrimeric complex composed of SEC61-alpha, SEC61-beta and SEC61-gamma.

It is found in the endoplasmic reticulum membrane. Necessary for protein translocation in the endoplasmic reticulum. In Encephalitozoon cuniculi (strain GB-M1) (Microsporidian parasite), this protein is Probable protein transport protein Sec61 subunit gamma.